The chain runs to 531 residues: Flavin-containing monooxygenase 3 (531 aa).

Residues G9 to S13, E32, L40 to W41, and N61 to S62 each bind FAD. NADP(+) contacts are provided by residues T60–N61 and S195–D198. S401 carries the post-translational modification Phosphoserine. A helical transmembrane segment spans residues Y511–I531.

It belongs to the FMO family. FAD is required as a cofactor. Detected in liver and kidney (at protein level). Expressed in kidney and liver. Weakly expressed in lung. Does not seem to be expressed in brain, adipose tissue, or muscle.

It localises to the microsome membrane. The protein resides in the endoplasmic reticulum membrane. The catalysed reaction is trimethylamine + NADPH + O2 = trimethylamine N-oxide + NADP(+) + H2O. The enzyme catalyses N,N-dimethylaniline + NADPH + O2 + H(+) = N,N-dimethylaniline N-oxide + NADP(+) + H2O. It catalyses the reaction hypotaurine + NADPH + O2 + H(+) = taurine + NADP(+) + H2O. It carries out the reaction (S)-nicotine + NADPH + O2 = trans-(S)-nicotine N(1')-oxide + NADP(+) + H2O. The catalysed reaction is albendazole + NADPH + O2 + H(+) = albendazole S-oxide + NADP(+) + H2O. Essential hepatic enzyme that catalyzes the oxygenation of a wide variety of nitrogen- and sulfur-containing compounds including drugs as well as dietary compounds. Plays an important role in the metabolism of trimethylamine (TMA), via the production of trimethylamine N-oxide (TMAO) metabolite. TMA is generated by the action of gut microbiota using dietary precursors such as choline, choline containing compounds, betaine or L-carnitine. By regulating TMAO concentration, FMO3 directly impacts both platelet responsiveness and rate of thrombus formation. The chain is Flavin-containing monooxygenase 3 (Fmo3) from Rattus norvegicus (Rat).